We begin with the raw amino-acid sequence, 378 residues long: Biotin synthase (378 aa).

The region spanning N68–S292 is the Radical SAM core domain. 3 residues coordinate [4Fe-4S] cluster: C83, C87, and C90. Positions 129, 160, 220, and 296 each coordinate [2Fe-2S] cluster.

It belongs to the radical SAM superfamily. Biotin synthase family. In terms of assembly, homodimer. It depends on [4Fe-4S] cluster as a cofactor. Requires [2Fe-2S] cluster as cofactor.

The enzyme catalyses (4R,5S)-dethiobiotin + (sulfur carrier)-SH + 2 reduced [2Fe-2S]-[ferredoxin] + 2 S-adenosyl-L-methionine = (sulfur carrier)-H + biotin + 2 5'-deoxyadenosine + 2 L-methionine + 2 oxidized [2Fe-2S]-[ferredoxin]. The protein operates within cofactor biosynthesis; biotin biosynthesis; biotin from 7,8-diaminononanoate: step 2/2. In terms of biological role, catalyzes the conversion of dethiobiotin (DTB) to biotin by the insertion of a sulfur atom into dethiobiotin via a radical-based mechanism. The polypeptide is Biotin synthase (Psychrobacter arcticus (strain DSM 17307 / VKM B-2377 / 273-4)).